The chain runs to 360 residues: uncharacterized protein (360 aa).

An ABC transporter domain is found at 4 to 235 (LSLQHIQKIY…PANMFVSGFI (232 aa)). An ATP-binding site is contributed by 37–44 (GPSGCGKS).

The protein belongs to the ABC transporter superfamily.

This is an uncharacterized protein from Escherichia coli (strain K12).